We begin with the raw amino-acid sequence, 508 residues long: Lysine--tRNA ligase (508 aa).

Glu-403 and Glu-410 together coordinate Mg(2+).

Belongs to the class-II aminoacyl-tRNA synthetase family. Homodimer. It depends on Mg(2+) as a cofactor.

It localises to the cytoplasm. The enzyme catalyses tRNA(Lys) + L-lysine + ATP = L-lysyl-tRNA(Lys) + AMP + diphosphate. In Methanoculleus marisnigri (strain ATCC 35101 / DSM 1498 / JR1), this protein is Lysine--tRNA ligase.